The chain runs to 90 residues: Acylphosphatase (90 aa).

Residues Asn-3–Tyr-90 form the Acylphosphatase-like domain. Residues Arg-18 and Asn-36 contribute to the active site.

Belongs to the acylphosphatase family.

It catalyses the reaction an acyl phosphate + H2O = a carboxylate + phosphate + H(+). The chain is Acylphosphatase (acyP) from Ligilactobacillus salivarius (strain UCC118) (Lactobacillus salivarius).